We begin with the raw amino-acid sequence, 276 residues long: ATP synthase subunit a (276 aa).

6 helical membrane-spanning segments follow: residues 47–67, 107–127, 152–172, 188–208, 226–246, and 247–267; these read WHID…WLFY, IAPL…MDLI, DLNV…FYSI, PFNH…TLIA, LIFI…SVPW, and AIFH…LTIV.

The protein belongs to the ATPase A chain family. As to quaternary structure, F-type ATPases have 2 components, CF(1) - the catalytic core - and CF(0) - the membrane proton channel. CF(1) has five subunits: alpha(3), beta(3), gamma(1), delta(1), epsilon(1). CF(0) has three main subunits: a(1), b(2) and c(9-12). The alpha and beta chains form an alternating ring which encloses part of the gamma chain. CF(1) is attached to CF(0) by a central stalk formed by the gamma and epsilon chains, while a peripheral stalk is formed by the delta and b chains.

Its subcellular location is the cell inner membrane. Functionally, key component of the proton channel; it plays a direct role in the translocation of protons across the membrane. The protein is ATP synthase subunit a of Shewanella halifaxensis (strain HAW-EB4).